Reading from the N-terminus, the 276-residue chain is 2,3,4,5-tetrahydropyridine-2,6-dicarboxylate N-succinyltransferase (276 aa).

Substrate-binding residues include Arg104 and Asp141.

Belongs to the transferase hexapeptide repeat family. Homotrimer.

It localises to the cytoplasm. The catalysed reaction is (S)-2,3,4,5-tetrahydrodipicolinate + succinyl-CoA + H2O = (S)-2-succinylamino-6-oxoheptanedioate + CoA. The protein operates within amino-acid biosynthesis; L-lysine biosynthesis via DAP pathway; LL-2,6-diaminopimelate from (S)-tetrahydrodipicolinate (succinylase route): step 1/3. In Legionella pneumophila (strain Paris), this protein is 2,3,4,5-tetrahydropyridine-2,6-dicarboxylate N-succinyltransferase.